The following is a 410-amino-acid chain: Large ribosomal subunit protein uL4 (410 aa).

It belongs to the universal ribosomal protein uL4 family.

The protein localises to the cytoplasm. The sequence is that of Large ribosomal subunit protein uL4 (RPL4) from Tetrahymena thermophila (strain SB210).